The following is a 206-amino-acid chain: 3-isopropylmalate dehydratase small subunit (206 aa).

Belongs to the LeuD family. LeuD type 1 subfamily. Heterodimer of LeuC and LeuD.

The catalysed reaction is (2R,3S)-3-isopropylmalate = (2S)-2-isopropylmalate. It participates in amino-acid biosynthesis; L-leucine biosynthesis; L-leucine from 3-methyl-2-oxobutanoate: step 2/4. Catalyzes the isomerization between 2-isopropylmalate and 3-isopropylmalate, via the formation of 2-isopropylmaleate. This Leptospira borgpetersenii serovar Hardjo-bovis (strain L550) protein is 3-isopropylmalate dehydratase small subunit.